We begin with the raw amino-acid sequence, 227 residues long: Cytochrome c oxidase subunit 2 (227 aa).

Over 1-14 (MAYPMQLGFQDATS) the chain is Mitochondrial intermembrane. Residues 15-45 (PIMEELLHFHDHTLMIVFLISSLVLYVISLM) traverse the membrane as a helical segment. Residues 46–59 (LTTKLTHTSTMDAQ) are Mitochondrial matrix-facing. Residues 60-87 (EVETIWTILPAIILILIALPSLRILYMM) traverse the membrane as a helical segment. Over 88-227 (DEINNPSLTV…YFEKWSASML (140 aa)) the chain is Mitochondrial intermembrane. Positions 161, 196, 198, 200, 204, and 207 each coordinate Cu cation. Glu198 lines the Mg(2+) pocket. Tyr218 carries the post-translational modification Phosphotyrosine.

The protein belongs to the cytochrome c oxidase subunit 2 family. Component of the cytochrome c oxidase (complex IV, CIV), a multisubunit enzyme composed of 14 subunits. The complex is composed of a catalytic core of 3 subunits MT-CO1, MT-CO2 and MT-CO3, encoded in the mitochondrial DNA, and 11 supernumerary subunits COX4I, COX5A, COX5B, COX6A, COX6B, COX6C, COX7A, COX7B, COX7C, COX8 and NDUFA4, which are encoded in the nuclear genome. The complex exists as a monomer or a dimer and forms supercomplexes (SCs) in the inner mitochondrial membrane with NADH-ubiquinone oxidoreductase (complex I, CI) and ubiquinol-cytochrome c oxidoreductase (cytochrome b-c1 complex, complex III, CIII), resulting in different assemblies (supercomplex SCI(1)III(2)IV(1) and megacomplex MCI(2)III(2)IV(2)). Found in a complex with TMEM177, COA6, COX18, COX20, SCO1 and SCO2. Interacts with TMEM177 in a COX20-dependent manner. Interacts with COX20. Interacts with COX16. Cu cation serves as cofactor.

Its subcellular location is the mitochondrion inner membrane. It carries out the reaction 4 Fe(II)-[cytochrome c] + O2 + 8 H(+)(in) = 4 Fe(III)-[cytochrome c] + 2 H2O + 4 H(+)(out). In terms of biological role, component of the cytochrome c oxidase, the last enzyme in the mitochondrial electron transport chain which drives oxidative phosphorylation. The respiratory chain contains 3 multisubunit complexes succinate dehydrogenase (complex II, CII), ubiquinol-cytochrome c oxidoreductase (cytochrome b-c1 complex, complex III, CIII) and cytochrome c oxidase (complex IV, CIV), that cooperate to transfer electrons derived from NADH and succinate to molecular oxygen, creating an electrochemical gradient over the inner membrane that drives transmembrane transport and the ATP synthase. Cytochrome c oxidase is the component of the respiratory chain that catalyzes the reduction of oxygen to water. Electrons originating from reduced cytochrome c in the intermembrane space (IMS) are transferred via the dinuclear copper A center (CU(A)) of subunit 2 and heme A of subunit 1 to the active site in subunit 1, a binuclear center (BNC) formed by heme A3 and copper B (CU(B)). The BNC reduces molecular oxygen to 2 water molecules using 4 electrons from cytochrome c in the IMS and 4 protons from the mitochondrial matrix. The chain is Cytochrome c oxidase subunit 2 (MT-CO2) from Rusa unicolor (Sambar).